A 429-amino-acid polypeptide reads, in one-letter code: Aspartate--tRNA(Asp/Asn) ligase (429 aa).

Glu167 provides a ligand contact to L-aspartate. An aspartate region spans residues 189 to 192 (QLYK). An L-aspartate-binding site is contributed by Arg210. ATP-binding positions include 210–212 (RAE) and Glu352. Mg(2+) is bound by residues Glu352 and Ser355. Positions 355 and 359 each coordinate L-aspartate. Position 400–403 (400–403 (GLAR)) interacts with ATP.

This sequence belongs to the class-II aminoacyl-tRNA synthetase family. Type 2 subfamily. As to quaternary structure, homodimer. Mg(2+) serves as cofactor.

It localises to the cytoplasm. It catalyses the reaction tRNA(Asx) + L-aspartate + ATP = L-aspartyl-tRNA(Asx) + AMP + diphosphate. Aspartyl-tRNA synthetase with relaxed tRNA specificity since it is able to aspartylate not only its cognate tRNA(Asp) but also tRNA(Asn). Reaction proceeds in two steps: L-aspartate is first activated by ATP to form Asp-AMP and then transferred to the acceptor end of tRNA(Asp/Asn). The protein is Aspartate--tRNA(Asp/Asn) ligase of Sulfurisphaera tokodaii (strain DSM 16993 / JCM 10545 / NBRC 100140 / 7) (Sulfolobus tokodaii).